The primary structure comprises 427 residues: MLDVKLLRNNFEEVKQKLQNRGEDLGEFEKFGELDKRRRTLIVETEALKSQRNEVSQEIAKLKREKQDADAKIEEMRVVGDRIKTLDIELREIDEKLDMILMSIPNIPHESTPVGESEDDNVEIRKWGEVRTFDFEPKAHWDLGTDLDILDFENAAKVTGSRFVFYKKLGARLERALINFMMDLHSNEHGYEEMLPPYMVNRASMTGTGQLPKFEEDAFLIEAEDYFLIPTAEVPVTNYHREDILKAEDLPRKYTAFSACFRSEAGSAGRDTRGLIRQHQFNKVELVQFVKPEDSYEALEKLTSNAEEVLRRLELPYRVLSMCTADLGFTAAKKYDLEVWIPSYDSYREISSCSNFESFQARRANIRFRREPGSKPEYVHTLNGSGLALGRTVAAILENYQDADGSVRIPKVLQGYMGGIEKIELPK.

231–233 provides a ligand contact to L-serine; it reads TAE. 262 to 264 is a binding site for ATP; it reads RSE. Glu-285 lines the L-serine pocket. Residue 349 to 352 participates in ATP binding; that stretch reads EISS. An L-serine-binding site is contributed by Ser-385.

The protein belongs to the class-II aminoacyl-tRNA synthetase family. Type-1 seryl-tRNA synthetase subfamily. As to quaternary structure, homodimer. The tRNA molecule binds across the dimer.

The protein resides in the cytoplasm. It carries out the reaction tRNA(Ser) + L-serine + ATP = L-seryl-tRNA(Ser) + AMP + diphosphate + H(+). The catalysed reaction is tRNA(Sec) + L-serine + ATP = L-seryl-tRNA(Sec) + AMP + diphosphate + H(+). The protein operates within aminoacyl-tRNA biosynthesis; selenocysteinyl-tRNA(Sec) biosynthesis; L-seryl-tRNA(Sec) from L-serine and tRNA(Sec): step 1/1. In terms of biological role, catalyzes the attachment of serine to tRNA(Ser). Is also able to aminoacylate tRNA(Sec) with serine, to form the misacylated tRNA L-seryl-tRNA(Sec), which will be further converted into selenocysteinyl-tRNA(Sec). The chain is Serine--tRNA ligase from Listeria welshimeri serovar 6b (strain ATCC 35897 / DSM 20650 / CCUG 15529 / CIP 8149 / NCTC 11857 / SLCC 5334 / V8).